The following is a 419-amino-acid chain: uncharacterized protein (419 aa).

A run of 13 helical transmembrane segments spans residues M5–I25, A26–I46, F53–L73, V102–I122, V144–V164, F170–F190, A210–L230, L234–L254, A274–F294, I309–P329, M332–L352, M360–I380, and L396–L416.

It belongs to the YiaN/YgiK family.

It is found in the cell inner membrane. This is an uncharacterized protein from Sinorhizobium fredii (strain NBRC 101917 / NGR234).